The sequence spans 310 residues: Porphobilinogen deaminase (310 aa).

Cys242 is subject to S-(dipyrrolylmethanemethyl)cysteine.

It belongs to the HMBS family. Monomer. Dipyrromethane serves as cofactor.

The catalysed reaction is 4 porphobilinogen + H2O = hydroxymethylbilane + 4 NH4(+). Its pathway is porphyrin-containing compound metabolism; protoporphyrin-IX biosynthesis; coproporphyrinogen-III from 5-aminolevulinate: step 2/4. Its function is as follows. Tetrapolymerization of the monopyrrole PBG into the hydroxymethylbilane pre-uroporphyrinogen in several discrete steps. In Shewanella pealeana (strain ATCC 700345 / ANG-SQ1), this protein is Porphobilinogen deaminase.